The primary structure comprises 146 residues: Ribosome maturation factor RimP (146 aa).

It belongs to the RimP family.

Its subcellular location is the cytoplasm. Its function is as follows. Required for maturation of 30S ribosomal subunits. The protein is Ribosome maturation factor RimP of Helicobacter pylori (strain P12).